We begin with the raw amino-acid sequence, 182 residues long: Protein GrpE (182 aa).

This sequence belongs to the GrpE family. Homodimer.

The protein localises to the cytoplasm. In terms of biological role, participates actively in the response to hyperosmotic and heat shock by preventing the aggregation of stress-denatured proteins, in association with DnaK and GrpE. It is the nucleotide exchange factor for DnaK and may function as a thermosensor. Unfolded proteins bind initially to DnaJ; upon interaction with the DnaJ-bound protein, DnaK hydrolyzes its bound ATP, resulting in the formation of a stable complex. GrpE releases ADP from DnaK; ATP binding to DnaK triggers the release of the substrate protein, thus completing the reaction cycle. Several rounds of ATP-dependent interactions between DnaJ, DnaK and GrpE are required for fully efficient folding. In Aquifex aeolicus (strain VF5), this protein is Protein GrpE.